The sequence spans 344 residues: Ig alpha chain C region (344 aa).

An Ig-like 1 domain is found at 6 to 99 (PTIYPLTLPP…SNPVQELDVN (94 aa)). Intrachain disulfides connect C26/C84 and C76/C100. 2 N-linked (GlcNAc...) asparagine glycosylation sites follow: N38 and N99. S101 carries O-linked (GalNAc) serine; in variant MOPC 47A glycosylation. Cystine bridges form between C114-C171 and C138-C195. Ig-like domains are found at residues 116 to 206 (PSLS…GTLT) and 219 to 321 (PQVH…KTID). Residue N329 is glycosylated (N-linked (GlcNAc...) asparagine). N-linked (GlcNAc...) asparagine; in variant M511 glycosylation occurs at S331.

In terms of biological role, ig alpha is the major immunoglobulin class in body secretions. It may serve both to defend against local infection and to prevent access of foreign antigens to the general immunologic system. This chain is Ig alpha chain C region, found in Mus musculus (Mouse).